Here is a 325-residue protein sequence, read N- to C-terminus: Tagatose 1,6-diphosphate aldolase 1 (325 aa).

This sequence belongs to the aldolase LacD family.

It catalyses the reaction D-tagatofuranose 1,6-bisphosphate = D-glyceraldehyde 3-phosphate + dihydroxyacetone phosphate. The protein operates within carbohydrate metabolism; D-tagatose 6-phosphate degradation; D-glyceraldehyde 3-phosphate and glycerone phosphate from D-tagatose 6-phosphate: step 2/2. The protein is Tagatose 1,6-diphosphate aldolase 1 (lacD1) of Streptococcus mutans serotype c (strain ATCC 700610 / UA159).